We begin with the raw amino-acid sequence, 305 residues long: MRVDGDTWDITSSVGATALGVAAARATETLRADALIRDPFAQILVDATGKATGWERLVAGDIDWPDPEAGRIYDRMVDYQATRTHFFDEYFLAAAAAGIRQVVILASGLDSRAYRLDWPAGTTVYEIDQPQVLKFKDSALAAHQPTAQRRGVAIDLREDWPAALRAAGFDSAQPTAWLAEGLLPYLPADAQDNLFRDIGVLSAAGSRVAVEGYEGKLVLDESEEEAVRREQVRAAFKTAIDVDVTIENLIYEDENRADPAEWLDAHGWSVTKTDAHDEMARLGRPVAEDVERGTFRGQLIQGELR.

S-adenosyl-L-methionine is bound by residues aspartate 128 and 155–156 (DL).

This sequence belongs to the UPF0677 family.

Functionally, exhibits S-adenosyl-L-methionine-dependent methyltransferase activity. This Mycobacteroides abscessus (strain ATCC 19977 / DSM 44196 / CCUG 20993 / CIP 104536 / JCM 13569 / NCTC 13031 / TMC 1543 / L948) (Mycobacterium abscessus) protein is Putative S-adenosyl-L-methionine-dependent methyltransferase MAB_4607c.